We begin with the raw amino-acid sequence, 381 residues long: Succinyl-diaminopimelate desuccinylase (381 aa).

Position 70 (H70) interacts with Zn(2+). D72 is an active-site residue. D103 provides a ligand contact to Zn(2+). E136 (proton acceptor) is an active-site residue. Zn(2+) is bound by residues E137, E165, and H354.

Belongs to the peptidase M20A family. DapE subfamily. As to quaternary structure, homodimer. Zn(2+) serves as cofactor. Co(2+) is required as a cofactor.

The enzyme catalyses N-succinyl-(2S,6S)-2,6-diaminopimelate + H2O = (2S,6S)-2,6-diaminopimelate + succinate. Its pathway is amino-acid biosynthesis; L-lysine biosynthesis via DAP pathway; LL-2,6-diaminopimelate from (S)-tetrahydrodipicolinate (succinylase route): step 3/3. Its function is as follows. Catalyzes the hydrolysis of N-succinyl-L,L-diaminopimelic acid (SDAP), forming succinate and LL-2,6-diaminopimelate (DAP), an intermediate involved in the bacterial biosynthesis of lysine and meso-diaminopimelic acid, an essential component of bacterial cell walls. The polypeptide is Succinyl-diaminopimelate desuccinylase (Roseobacter denitrificans (strain ATCC 33942 / OCh 114) (Erythrobacter sp. (strain OCh 114))).